The following is a 338-amino-acid chain: Hydroxyproline O-galactosyltransferase HPGT1 (338 aa).

Over 1–12 (MARKGSSIRLSS) the chain is Cytoplasmic. The chain crosses the membrane as a helical; Signal-anchor for type II membrane protein span at residues 13–32 (SRISTLLLFMFATFASFYVA). Over 33–338 (GRLWQESQTR…WSSEAICAGV (306 aa)) the chain is Lumenal.

This sequence belongs to the glycosyltransferase 31 family. It depends on Mn(2+) as a cofactor. As to expression, expressed in roots, rosette leaves, cauline leaves, stems, flowers and siliques.

It is found in the golgi apparatus membrane. The protein operates within protein modification; protein glycosylation. Functionally, possesses hydroxyproline O-galactosyltransferase activity. Transfers galactose from UDP-galactose to hydroxyproline residues in the arabinogalactan proteins (AGPs). Is specific for AGPs containing non-contiguous peptidyl hydroxyproline residues. The addition of galactose onto the peptidyl hydroxyproline residues in AGP core proteins represents the first committed step in arabinogalactan polysaccharide addition. AGP glycans play essential roles in both vegetative and reproductive plant growth. The protein is Hydroxyproline O-galactosyltransferase HPGT1 of Arabidopsis thaliana (Mouse-ear cress).